The sequence spans 122 residues: MALSHSVKERTISENSLIILLQGLQGQITTVDLRDESVARGRIDNVDAFMNIRLANVTYTDRWGHQVELDDLFVTGRNVRYVHIPDGVDITATIEQQLQIIHRVRNFGGKGQGRREFPSKRP.

The Sm domain occupies 16–88; it reads SLIILLQGLQ…VRYVHIPDGV (73 aa).

It belongs to the snRNP Sm proteins family. Component of the heptameric ring U7 snRNP complex, or U7 Sm protein core complex, at least composed of LSM10, LSM11, SNRPB, SNRPD3, SNRPE, SNRPF, SNRPG and U7 snRNA. Formation of the U7 snRNP is an ATP-dependent process mediated by a specialized SMN complex containing at least the Sm protein core complex and additionally, the U7-specific LSM10 and LSM11 proteins. Interacts with CLNS1A and SMN. Not methylated. Methylation is not necessary for interaction with SMN.

It localises to the nucleus. In terms of biological role, appears to function in the U7 snRNP complex that is involved in histone 3'-end processing. Increases U7 snRNA levels but not histone 3'-end pre-mRNA processing activity, when overexpressed. Required for cell cycle progression from G1 to S phases. Binds specifically to U7 snRNA. Binds to the downstream cleavage product (DCP) of histone pre-mRNA. The sequence is that of U7 snRNA-associated Sm-like protein LSm10 (Lsm10) from Mus musculus (Mouse).